The chain runs to 116 residues: Promotilin (116 aa).

The first 25 residues, 1 to 25, serve as a signal peptide directing secretion; it reads MVSRKAVAVLLMVHVAVMLASQTEA. The disordered stretch occupies residues 39-74; sequence REKERNKGQKKSLIVQQRSEEVGPLDPVEPPEEEEN.

This sequence belongs to the motilin family.

It localises to the secreted. In terms of biological role, plays an important role in the regulation of interdigestive gastrointestinal motility and indirectly causes rhythmic contraction of duodenal and colonic smooth muscle. The protein is Promotilin (MLN) of Felis catus (Cat).